Here is a 354-residue protein sequence, read N- to C-terminus: Uroporphyrinogen decarboxylase (354 aa).

Substrate-binding positions include 27 to 31, Asp77, Tyr154, Thr209, and His327; that span reads RQAGR.

This sequence belongs to the uroporphyrinogen decarboxylase family. As to quaternary structure, homodimer.

Its subcellular location is the cytoplasm. It catalyses the reaction uroporphyrinogen III + 4 H(+) = coproporphyrinogen III + 4 CO2. Its pathway is porphyrin-containing compound metabolism; protoporphyrin-IX biosynthesis; coproporphyrinogen-III from 5-aminolevulinate: step 4/4. Functionally, catalyzes the decarboxylation of four acetate groups of uroporphyrinogen-III to yield coproporphyrinogen-III. The protein is Uroporphyrinogen decarboxylase of Shigella dysenteriae serotype 1 (strain Sd197).